Consider the following 199-residue polypeptide: Peroxiredoxin-1 (199 aa).

Positions 6-165 constitute a Thioredoxin domain; that stretch reads AYIGKLAPDF…TLRLVQAFQF (160 aa). The active-site Cysteine sulfenic acid (-SOH) intermediate is C52.

It belongs to the peroxiredoxin family. AhpC/Prx1 subfamily. As to quaternary structure, homodimer; disulfide-linked, upon oxidation. 5 homodimers assemble to form a ring-like decamer. Interacts with GDPD5; forms a mixed-disulfide with GDPD5. Interacts with SESN1 and SESN2. Interacts with FAM107A. In terms of processing, the enzyme can be inactivated by further oxidation of the cysteine sulfenic acid (C(P)-SOH) to sulphinic acid (C(P)-SO2H) instead of its condensation to a disulfide bond. It can be reactivated by forming a transient disulfide bond with sulfiredoxin SRXN1, which reduces the cysteine sulfinic acid in an ATP- and Mg-dependent manner.

It localises to the cytoplasm. The enzyme catalyses a hydroperoxide + [thioredoxin]-dithiol = an alcohol + [thioredoxin]-disulfide + H2O. Thiol-specific peroxidase that catalyzes the reduction of hydrogen peroxide and organic hydroperoxides to water and alcohols, respectively. Plays a role in cell protection against oxidative stress by detoxifying peroxides and as sensor of hydrogen peroxide-mediated signaling events. Might participate in the signaling cascades of growth factors and tumor necrosis factor-alpha by regulating the intracellular concentrations of H(2)O(2). Reduces an intramolecular disulfide bond in GDPD5 that gates the ability to GDPD5 to drive postmitotic motor neuron differentiation. The chain is Peroxiredoxin-1 (PRDX1) from Gekko japonicus (Schlegel's Japanese gecko).